The primary structure comprises 155 residues: SsrA-binding protein (155 aa).

The protein belongs to the SmpB family.

It localises to the cytoplasm. Functionally, required for rescue of stalled ribosomes mediated by trans-translation. Binds to transfer-messenger RNA (tmRNA), required for stable association of tmRNA with ribosomes. tmRNA and SmpB together mimic tRNA shape, replacing the anticodon stem-loop with SmpB. tmRNA is encoded by the ssrA gene; the 2 termini fold to resemble tRNA(Ala) and it encodes a 'tag peptide', a short internal open reading frame. During trans-translation Ala-aminoacylated tmRNA acts like a tRNA, entering the A-site of stalled ribosomes, displacing the stalled mRNA. The ribosome then switches to translate the ORF on the tmRNA; the nascent peptide is terminated with the 'tag peptide' encoded by the tmRNA and targeted for degradation. The ribosome is freed to recommence translation, which seems to be the essential function of trans-translation. The polypeptide is SsrA-binding protein (Gloeothece citriformis (strain PCC 7424) (Cyanothece sp. (strain PCC 7424))).